A 171-amino-acid polypeptide reads, in one-letter code: ATP synthase subunit b (171 aa).

A helical membrane pass occupies residues 26 to 48 (LINLAIIIGLLVYAGRGFLGNLL).

Belongs to the ATPase B chain family. In terms of assembly, F-type ATPases have 2 components, F(1) - the catalytic core - and F(0) - the membrane proton channel. F(1) has five subunits: alpha(3), beta(3), gamma(1), delta(1), epsilon(1). F(0) has four main subunits: a(1), b(1), b'(1) and c(10-14). The alpha and beta chains form an alternating ring which encloses part of the gamma chain. F(1) is attached to F(0) by a central stalk formed by the gamma and epsilon chains, while a peripheral stalk is formed by the delta, b and b' chains.

The protein localises to the cellular thylakoid membrane. In terms of biological role, f(1)F(0) ATP synthase produces ATP from ADP in the presence of a proton or sodium gradient. F-type ATPases consist of two structural domains, F(1) containing the extramembraneous catalytic core and F(0) containing the membrane proton channel, linked together by a central stalk and a peripheral stalk. During catalysis, ATP synthesis in the catalytic domain of F(1) is coupled via a rotary mechanism of the central stalk subunits to proton translocation. Functionally, component of the F(0) channel, it forms part of the peripheral stalk, linking F(1) to F(0). The polypeptide is ATP synthase subunit b (Synechococcus elongatus (strain ATCC 33912 / PCC 7942 / FACHB-805) (Anacystis nidulans R2)).